The primary structure comprises 398 residues: Queuine tRNA-ribosyltransferase (398 aa).

Asp-102 functions as the Proton acceptor in the catalytic mechanism. Residues 102-106 (DSGGF), Asp-156, Gln-205, and Gly-232 contribute to the substrate site. The RNA binding stretch occupies residues 263–269 (GVGTPED). Catalysis depends on Asp-282, which acts as the Nucleophile. Residues 287-291 (TRNAR) form an RNA binding; important for wobble base 34 recognition region. Positions 320, 322, 325, and 362 each coordinate Zn(2+).

This sequence belongs to the queuine tRNA-ribosyltransferase family. Homodimer. Within each dimer, one monomer is responsible for RNA recognition and catalysis, while the other monomer binds to the replacement base PreQ1. It depends on Zn(2+) as a cofactor.

It carries out the reaction 7-aminomethyl-7-carbaguanine + guanosine(34) in tRNA = 7-aminomethyl-7-carbaguanosine(34) in tRNA + guanine. Its pathway is tRNA modification; tRNA-queuosine biosynthesis. Its function is as follows. Catalyzes the base-exchange of a guanine (G) residue with the queuine precursor 7-aminomethyl-7-deazaguanine (PreQ1) at position 34 (anticodon wobble position) in tRNAs with GU(N) anticodons (tRNA-Asp, -Asn, -His and -Tyr). Catalysis occurs through a double-displacement mechanism. The nucleophile active site attacks the C1' of nucleotide 34 to detach the guanine base from the RNA, forming a covalent enzyme-RNA intermediate. The proton acceptor active site deprotonates the incoming PreQ1, allowing a nucleophilic attack on the C1' of the ribose to form the product. After dissociation, two additional enzymatic reactions on the tRNA convert PreQ1 to queuine (Q), resulting in the hypermodified nucleoside queuosine (7-(((4,5-cis-dihydroxy-2-cyclopenten-1-yl)amino)methyl)-7-deazaguanosine). The sequence is that of Queuine tRNA-ribosyltransferase from Polaromonas sp. (strain JS666 / ATCC BAA-500).